The primary structure comprises 201 residues: 3-isopropylmalate dehydratase small subunit (201 aa).

This sequence belongs to the LeuD family. LeuD type 1 subfamily. In terms of assembly, heterodimer of LeuC and LeuD.

It carries out the reaction (2R,3S)-3-isopropylmalate = (2S)-2-isopropylmalate. The protein operates within amino-acid biosynthesis; L-leucine biosynthesis; L-leucine from 3-methyl-2-oxobutanoate: step 2/4. In terms of biological role, catalyzes the isomerization between 2-isopropylmalate and 3-isopropylmalate, via the formation of 2-isopropylmaleate. The protein is 3-isopropylmalate dehydratase small subunit of Ruegeria sp. (strain TM1040) (Silicibacter sp.).